The primary structure comprises 111 residues: High mobility group protein Z (111 aa).

The segment at residues Pro6–Glu72 is a DNA-binding region (HMG box). The residue at position 11 (Ser11) is a Phosphoserine. The tract at residues Glu72–Glu111 is disordered. Basic residues predominate over residues Pro82–Lys98. Over residues Ser102–Glu111 the composition is skewed to acidic residues.

This sequence belongs to the HMGB family.

The protein resides in the nucleus. It is found in the chromosome. In Drosophila melanogaster (Fruit fly), this protein is High mobility group protein Z (HmgZ).